Here is a 508-residue protein sequence, read N- to C-terminus: Photosystem II CP47 reaction center protein (508 aa).

6 helical membrane passes run Ala21 to Ser36, Ile101 to Trp115, Gly140 to Phe156, Ile203 to Ser218, Val237 to Val252, and Thr457 to Arg472.

The protein belongs to the PsbB/PsbC family. PsbB subfamily. In terms of assembly, PSII is composed of 1 copy each of membrane proteins PsbA, PsbB, PsbC, PsbD, PsbE, PsbF, PsbH, PsbI, PsbJ, PsbK, PsbL, PsbM, PsbT, PsbX, PsbY, PsbZ, Psb30/Ycf12, at least 3 peripheral proteins of the oxygen-evolving complex and a large number of cofactors. It forms dimeric complexes. Requires Binds multiple chlorophylls. PSII binds additional chlorophylls, carotenoids and specific lipids. as cofactor.

The protein resides in the plastid. It localises to the chloroplast thylakoid membrane. In terms of biological role, one of the components of the core complex of photosystem II (PSII). It binds chlorophyll and helps catalyze the primary light-induced photochemical processes of PSII. PSII is a light-driven water:plastoquinone oxidoreductase, using light energy to abstract electrons from H(2)O, generating O(2) and a proton gradient subsequently used for ATP formation. The polypeptide is Photosystem II CP47 reaction center protein (Lolium perenne (Perennial ryegrass)).